The sequence spans 334 residues: Retinol dehydrogenase 14 (334 aa).

51-57 (GANSGLG) is an NADP(+) binding site. S190 is a binding site for substrate. Residue Y215 is the Proton acceptor of the active site.

It belongs to the short-chain dehydrogenases/reductases (SDR) family.

It catalyses the reaction all-trans-retinol + NADP(+) = all-trans-retinal + NADPH + H(+). The enzyme catalyses 11-cis-retinol + NADP(+) = 11-cis-retinal + NADPH + H(+). It carries out the reaction 9-cis-retinol + NADP(+) = 9-cis-retinal + NADPH + H(+). Functionally, retinol dehydrogenase with a clear preference for NADP. Displays high activity towards 9-cis, 11-cis and all-trans-retinol. Shows a very weak activity towards 13-cis-retinol. Has no activity towards steroids. This Mus musculus (Mouse) protein is Retinol dehydrogenase 14 (Rdh14).